The following is a 392-amino-acid chain: Digeranylgeranylglycerophospholipid reductase (392 aa).

Gly15, Glu34, Cys45, Ala46, Gly48, Arg99, Ala123, Asp279, Gly291, and Ile292 together coordinate FAD. Val370 contributes to the a 2,3-bis-O-(geranylgeranyl)-sn-glycerol 1-phospholipid binding site.

This sequence belongs to the geranylgeranyl reductase family. DGGGPL reductase subfamily. FAD is required as a cofactor.

The enzyme catalyses a 2,3-bis-O-phytanyl-sn-glycerol 1-phospholipid + 8 oxidized 2[4Fe-4S]-[ferredoxin] = a 2,3-bis-O-(geranylgeranyl)-sn-glycerol 1-phospholipid + 8 reduced 2[4Fe-4S]-[ferredoxin] + 16 H(+). It carries out the reaction 2,3-bis-O-(phytanyl)-sn-glycerol 1-phosphate + 8 oxidized 2[4Fe-4S]-[ferredoxin] = 2,3-bis-O-(geranylgeranyl)-sn-glycerol 1-phosphate + 8 reduced 2[4Fe-4S]-[ferredoxin] + 16 H(+). The catalysed reaction is a 2,3-bis-O-phytanyl-sn-glycerol 1-phospholipid + 8 A = a 2,3-bis-O-(geranylgeranyl)-sn-glycerol 1-phospholipid + 8 AH2. It catalyses the reaction CDP-2,3-bis-O-(geranylgeranyl)-sn-glycerol + 8 AH2 = CDP-2,3-bis-O-(phytanyl)-sn-glycerol + 8 A. The enzyme catalyses archaetidylserine + 8 AH2 = 2,3-bis-O-phytanyl-sn-glycero-3-phospho-L-serine + 8 A. It participates in membrane lipid metabolism; glycerophospholipid metabolism. In terms of biological role, is involved in the reduction of 2,3-digeranylgeranylglycerophospholipids (unsaturated archaeols) into 2,3-diphytanylglycerophospholipids (saturated archaeols) in the biosynthesis of archaeal membrane lipids. Catalyzes the formation of archaetidic acid (2,3-di-O-phytanyl-sn-glyceryl phosphate) from 2,3-di-O-geranylgeranylglyceryl phosphate (DGGGP) via the hydrogenation of each double bond of the isoprenoid chains. Is also probably able to reduce double bonds of geranyl groups in CDP-2,3-bis-O-(geranylgeranyl)-sn-glycerol and archaetidylserine, thus acting at various stages in the biosynthesis of archaeal membrane lipids. This is Digeranylgeranylglycerophospholipid reductase from Methanocella arvoryzae (strain DSM 22066 / NBRC 105507 / MRE50).